The primary structure comprises 225 residues: Orotate phosphoribosyltransferase (225 aa).

Position 31 (lysine 31) interacts with 5-phospho-alpha-D-ribose 1-diphosphate. Residue 39–40 participates in orotate binding; the sequence is FF. 5-phospho-alpha-D-ribose 1-diphosphate contacts are provided by residues 78–79, arginine 105, lysine 106, lysine 109, histidine 111, and 130–138; these read YK and DDVLTSGKA. The orotate site is built by threonine 134 and arginine 163.

It belongs to the purine/pyrimidine phosphoribosyltransferase family. PyrE subfamily. Homodimer.

The catalysed reaction is orotidine 5'-phosphate + diphosphate = orotate + 5-phospho-alpha-D-ribose 1-diphosphate. It functions in the pathway pyrimidine metabolism; UMP biosynthesis via de novo pathway; UMP from orotate: step 1/2. Catalyzes the transfer of a ribosyl phosphate group from 5-phosphoribose 1-diphosphate to orotate, leading to the formation of orotidine monophosphate (OMP). This chain is Orotate phosphoribosyltransferase (URA5), found in Cryptococcus neoformans var. neoformans serotype D (strain B-3501A) (Filobasidiella neoformans).